A 573-amino-acid polypeptide reads, in one-letter code: DNA ligase (573 aa).

Glu250 serves as a coordination point for ATP. The active-site N6-AMP-lysine intermediate is the Lys252. 6 residues coordinate ATP: Arg257, Arg272, Glu301, Phe342, Arg432, and Lys438.

Belongs to the ATP-dependent DNA ligase family. Requires Mg(2+) as cofactor.

It catalyses the reaction ATP + (deoxyribonucleotide)n-3'-hydroxyl + 5'-phospho-(deoxyribonucleotide)m = (deoxyribonucleotide)n+m + AMP + diphosphate.. In terms of biological role, DNA ligase that seals nicks in double-stranded DNA during DNA replication, DNA recombination and DNA repair. The sequence is that of DNA ligase from Methanococcus vannielii (strain ATCC 35089 / DSM 1224 / JCM 13029 / OCM 148 / SB).